We begin with the raw amino-acid sequence, 347 residues long: MDYKTSGVDIKAGREFVSEIKQSVESTYSSNVLEGIGGFGGLFKIPLEGLKKPVLVSGTDGVGTKLELAQIKNFHFEVGIDLVAMCMNDIITTGAKPLFFLDYIATGKLEKNQLLEVINGIAHSCRENKCSILGGETAEMPGFYSKNKYDLAGFCVGIADEEKLINGKKICENDLIIALQSNGMHSNGFSLVRKIIENNNQIDKQFEKKYNLDFYDELLKPTKIYFKIVNQILSQNIQIKGMSHITGGGIPENLPRCMSSDFIPYIDKKSWKIPVLFEFLKDVGQIPEKDFWNTFNLGVGFCLIIDKKYKDKILNICNAFDISSWVLGKVLKKNNSKENNFLPEIII.

This sequence belongs to the AIR synthase family.

It is found in the cytoplasm. The enzyme catalyses 2-formamido-N(1)-(5-O-phospho-beta-D-ribosyl)acetamidine + ATP = 5-amino-1-(5-phospho-beta-D-ribosyl)imidazole + ADP + phosphate + H(+). Its pathway is purine metabolism; IMP biosynthesis via de novo pathway; 5-amino-1-(5-phospho-D-ribosyl)imidazole from N(2)-formyl-N(1)-(5-phospho-D-ribosyl)glycinamide: step 2/2. The chain is Phosphoribosylformylglycinamidine cyclo-ligase from Prochlorococcus marinus subsp. pastoris (strain CCMP1986 / NIES-2087 / MED4).